The sequence spans 268 residues: N-formylmaleamate deformylase (268 aa).

Residues A28–D251 form the AB hydrolase-1 domain. Residues S101, E221, and H245 each act as charge relay system in the active site.

The enzyme catalyses N-formylmaleamate + H2O = maleamate + formate + H(+). Its pathway is cofactor degradation; nicotinate degradation. In terms of biological role, deformylase that catalyzes the conversion of N-formylmaleamic acid to maleamate in the aerobic nicotinate degradation pathway. The polypeptide is N-formylmaleamate deformylase (nicD) (Pseudomonas putida (strain ATCC 47054 / DSM 6125 / CFBP 8728 / NCIMB 11950 / KT2440)).